A 569-amino-acid chain; its full sequence is Urease subunit beta (569 aa).

In terms of domain architecture, Urease spans 131–569 (GGIDTHIHFI…VSLAQLFSIF (439 aa)). Residues His136, His138, and Lys219 each coordinate Ni(2+). Lys219 is subject to N6-carboxylysine. His221 is a substrate binding site. The Ni(2+) site is built by His248 and His274. Residue His322 is the Proton donor of the active site. A Ni(2+)-binding site is contributed by Asp362.

This sequence belongs to the metallo-dependent hydrolases superfamily. Urease alpha subunit family. As to quaternary structure, heterohexamer of 3 UreA (alpha) and 3 UreB (beta) subunits. Four heterohexamers assemble to form a 16 nm dodecameric complex. It depends on Ni cation as a cofactor. Carboxylation allows a single lysine to coordinate two nickel ions.

Its subcellular location is the cytoplasm. It carries out the reaction urea + 2 H2O + H(+) = hydrogencarbonate + 2 NH4(+). It participates in nitrogen metabolism; urea degradation; CO(2) and NH(3) from urea (urease route): step 1/1. In terms of biological role, ammonia produced by ureolysis increases the gastric pH thereby providing an environment permissive for colonization of the stomach. This chain is Urease subunit beta, found in Helicobacter pylori (strain J99 / ATCC 700824) (Campylobacter pylori J99).